The sequence spans 417 residues: UDP-N-acetylglucosamine 1-carboxyvinyltransferase 2 (417 aa).

22 to 23 (KN) provides a ligand contact to phosphoenolpyruvate. Residue Arg-92 participates in UDP-N-acetyl-alpha-D-glucosamine binding. The Proton donor role is filled by Cys-116. Cys-116 carries the 2-(S-cysteinyl)pyruvic acid O-phosphothioketal modification. UDP-N-acetyl-alpha-D-glucosamine-binding positions include 121–125 (RPIDL), Asp-305, and Ile-327.

This sequence belongs to the EPSP synthase family. MurA subfamily.

The protein localises to the cytoplasm. The catalysed reaction is phosphoenolpyruvate + UDP-N-acetyl-alpha-D-glucosamine = UDP-N-acetyl-3-O-(1-carboxyvinyl)-alpha-D-glucosamine + phosphate. The protein operates within cell wall biogenesis; peptidoglycan biosynthesis. Its function is as follows. Cell wall formation. Adds enolpyruvyl to UDP-N-acetylglucosamine. The protein is UDP-N-acetylglucosamine 1-carboxyvinyltransferase 2 of Caldanaerobacter subterraneus subsp. tengcongensis (strain DSM 15242 / JCM 11007 / NBRC 100824 / MB4) (Thermoanaerobacter tengcongensis).